The sequence spans 397 residues: Purine nucleoside transport protein NupG (397 aa).

The next 11 helical transmembrane spans lie at 1–21 (MYFL…FLCS), 32–52 (IITL…TKVG), 62–82 (FFTW…PSVM), 97–117 (IIFI…PWLI), 133–153 (LESF…LAVI), 165–185 (LLTF…GSYL), 187–207 (MVPA…ALII), 242–262 (MLVG…YVAL), 282–302 (IFAY…HDAM), 335–355 (VAVA…GMIY), and 377–397 (LLVS…LFVW).

It belongs to the concentrative nucleoside transporter (CNT) (TC 2.A.41) family.

The protein resides in the cell membrane. In terms of biological role, involved in the uptake of the purine ribonucleosides inosine and guanosine. In Bacillus subtilis (strain 168), this protein is Purine nucleoside transport protein NupG (nupG).